Reading from the N-terminus, the 552-residue chain is Dihydroxy-acid dehydratase (552 aa).

Cysteine 46 provides a ligand contact to [2Fe-2S] cluster. Aspartate 78 lines the Mg(2+) pocket. Cysteine 119 provides a ligand contact to [2Fe-2S] cluster. Mg(2+) is bound by residues aspartate 120 and lysine 121. Position 121 is an N6-carboxylysine (lysine 121). Cysteine 191 serves as a coordination point for [2Fe-2S] cluster. Position 442 (glutamate 442) interacts with Mg(2+). Serine 468 functions as the Proton acceptor in the catalytic mechanism.

This sequence belongs to the IlvD/Edd family. In terms of assembly, homodimer. [2Fe-2S] cluster is required as a cofactor. It depends on Mg(2+) as a cofactor.

It carries out the reaction (2R)-2,3-dihydroxy-3-methylbutanoate = 3-methyl-2-oxobutanoate + H2O. The enzyme catalyses (2R,3R)-2,3-dihydroxy-3-methylpentanoate = (S)-3-methyl-2-oxopentanoate + H2O. Its pathway is amino-acid biosynthesis; L-isoleucine biosynthesis; L-isoleucine from 2-oxobutanoate: step 3/4. It participates in amino-acid biosynthesis; L-valine biosynthesis; L-valine from pyruvate: step 3/4. Its function is as follows. Functions in the biosynthesis of branched-chain amino acids. Catalyzes the dehydration of (2R,3R)-2,3-dihydroxy-3-methylpentanoate (2,3-dihydroxy-3-methylvalerate) into 2-oxo-3-methylpentanoate (2-oxo-3-methylvalerate) and of (2R)-2,3-dihydroxy-3-methylbutanoate (2,3-dihydroxyisovalerate) into 2-oxo-3-methylbutanoate (2-oxoisovalerate), the penultimate precursor to L-isoleucine and L-valine, respectively. In Picrophilus torridus (strain ATCC 700027 / DSM 9790 / JCM 10055 / NBRC 100828 / KAW 2/3), this protein is Dihydroxy-acid dehydratase.